A 472-amino-acid polypeptide reads, in one-letter code: SURF6 homolog gldi-11 (472 aa).

4 disordered regions span residues 53–73, 89–232, 249–350, and 414–472; these read LSKK…AKGL, KSKQ…SPEI, KVER…DRAL, and LVKK…GRIL. The segment covering 95–106 has biased composition (low complexity); it reads KVQPQKVVAPVK. Basic and acidic residues predominate over residues 107-132; that stretch reads RPADQNKNKEKVVKKDQKKQDKKADS. The span at 133-150 shows a compositional bias: acidic residues; sequence DSEEDDSSDDEEKEETDE. Residues 151–160 show a composition bias toward basic and acidic residues; sequence PVAKKQKKEE. 2 stretches are compositionally biased toward acidic residues: residues 161–175 and 182–194; these read SSDD…EEPE and EAED…EEEE. Positions 197 to 210 are enriched in polar residues; it reads SKPNKTVAQSTLKS. A compositionally biased stretch (basic and acidic residues) spans 212–221; the sequence is GKIDKEIQKL. Positions 274–285 are enriched in basic residues; the sequence is LKRRESKLKLKQ. A compositionally biased stretch (basic and acidic residues) spans 286 to 305; that stretch reads RRAEEKKGKEAAAQVKKETV. Over residues 414–426 the composition is skewed to basic residues; the sequence is LVKKNKMKDRRKQ. The segment covering 427–443 has biased composition (basic and acidic residues); sequence KWENRENKTEGEKQTKQ. Over residues 459–472 the composition is skewed to basic residues; the sequence is KRKMNKLRNKGRIL.

This sequence belongs to the SURF6 family.

Its subcellular location is the nucleus. The protein localises to the nucleoplasm. Binds to both DNA and RNA in vitro, with a stronger binding capacity for RNA. May represent a nucleolar constitutive protein involved in ribosomal biosynthesis or assembly. This is SURF6 homolog gldi-11 from Caenorhabditis elegans.